The primary structure comprises 143 residues: Anti-sigma F factor (143 aa).

This sequence belongs to the anti-sigma-factor family.

It carries out the reaction L-seryl-[protein] + ATP = O-phospho-L-seryl-[protein] + ADP + H(+). The catalysed reaction is L-threonyl-[protein] + ATP = O-phospho-L-threonyl-[protein] + ADP + H(+). In terms of biological role, binds to sigma F and blocks its ability to form an RNA polymerase holoenzyme (E-sigma F). Phosphorylates SpoIIAA on a serine residue. This phosphorylation may enable SpoIIAA to act as an anti-anti-sigma factor that counteracts SpoIIAB and thus releases sigma F from inhibition. This Clostridium acetobutylicum (strain ATCC 824 / DSM 792 / JCM 1419 / IAM 19013 / LMG 5710 / NBRC 13948 / NRRL B-527 / VKM B-1787 / 2291 / W) protein is Anti-sigma F factor.